Consider the following 95-residue polypeptide: Aspartyl/glutamyl-tRNA(Asn/Gln) amidotransferase subunit C (95 aa).

It belongs to the GatC family. As to quaternary structure, heterotrimer of A, B and C subunits.

The catalysed reaction is L-glutamyl-tRNA(Gln) + L-glutamine + ATP + H2O = L-glutaminyl-tRNA(Gln) + L-glutamate + ADP + phosphate + H(+). The enzyme catalyses L-aspartyl-tRNA(Asn) + L-glutamine + ATP + H2O = L-asparaginyl-tRNA(Asn) + L-glutamate + ADP + phosphate + 2 H(+). Functionally, allows the formation of correctly charged Asn-tRNA(Asn) or Gln-tRNA(Gln) through the transamidation of misacylated Asp-tRNA(Asn) or Glu-tRNA(Gln) in organisms which lack either or both of asparaginyl-tRNA or glutaminyl-tRNA synthetases. The reaction takes place in the presence of glutamine and ATP through an activated phospho-Asp-tRNA(Asn) or phospho-Glu-tRNA(Gln). The protein is Aspartyl/glutamyl-tRNA(Asn/Gln) amidotransferase subunit C of Rhodopseudomonas palustris (strain BisA53).